The primary structure comprises 123 residues: Large ribosomal subunit protein bL21 (123 aa).

The protein belongs to the bacterial ribosomal protein bL21 family. Part of the 50S ribosomal subunit. Contacts protein L20.

This protein binds to 23S rRNA in the presence of protein L20. The protein is Large ribosomal subunit protein bL21 of Sinorhizobium fredii (strain NBRC 101917 / NGR234).